Reading from the N-terminus, the 323-residue chain is tRNA U34 carboxymethyltransferase (323 aa).

Residues lysine 91, tryptophan 105, lysine 110, glycine 130, 152–154 (DPT), 181–182 (IE), methionine 196, tyrosine 200, and arginine 315 contribute to the carboxy-S-adenosyl-L-methionine site.

It belongs to the class I-like SAM-binding methyltransferase superfamily. CmoB family. In terms of assembly, homotetramer.

The catalysed reaction is carboxy-S-adenosyl-L-methionine + 5-hydroxyuridine(34) in tRNA = 5-carboxymethoxyuridine(34) in tRNA + S-adenosyl-L-homocysteine + H(+). Catalyzes carboxymethyl transfer from carboxy-S-adenosyl-L-methionine (Cx-SAM) to 5-hydroxyuridine (ho5U) to form 5-carboxymethoxyuridine (cmo5U) at position 34 in tRNAs. In Escherichia coli O157:H7, this protein is tRNA U34 carboxymethyltransferase.